Here is a 652-residue protein sequence, read N- to C-terminus: Putative enzymatic polyprotein (652 aa).

The Peptidase A2 domain maps to 21–99 (YHGLFDTGAN…SPDIIIGATF (79 aa)). D26 is a catalytic residue. Residues 231–413 (FIEEKTNFED…EKIDFLGVQI (183 aa)) form the Reverse transcriptase domain. Mg(2+)-binding residues include D301, D364, and D365.

It carries out the reaction DNA(n) + a 2'-deoxyribonucleoside 5'-triphosphate = DNA(n+1) + diphosphate. The catalysed reaction is Endonucleolytic cleavage to 5'-phosphomonoester.. Encodes for at least two polypeptides: protease (PR) and reverse transcriptase (RT). The protease processes the polyprotein in cis. Reverse transcriptase is multifunctional enzyme that converts the viral RNA genome into dsDNA in viral cytoplasmic capsids. This enzyme displays a DNA polymerase activity that can copy either DNA or RNA templates, and a ribonuclease H (RNase H) activity that cleaves the RNA strand of RNA-DNA heteroduplexes in a partially processive 3'- to 5'-endonucleasic mode. Neo-synthesized pregenomic RNA (pgRNA) are encapsidated, and reverse-transcribed inside the nucleocapsid. Partial (+)DNA is synthesized from the (-)DNA template and generates the relaxed circular DNA (RC-DNA) genome. After budding and infection, the RC-DNA migrates in the nucleus, and is converted into a plasmid-like covalently closed circular DNA (cccDNA). The sequence is that of Putative enzymatic polyprotein from Cassava vein mosaic virus (CsVMV).